Reading from the N-terminus, the 274-residue chain is uncharacterized protein (274 aa).

A disordered region spans residues 235 to 274 (ETFDTQQDPKKTPETDKNAAYKGKEKKGKKEERGPRSIMK). A compositionally biased stretch (basic and acidic residues) spans 241-274 (QDPKKTPETDKNAAYKGKEKKGKKEERGPRSIMK).

This is an uncharacterized protein from Treponema pallidum (strain Nichols).